The following is a 481-amino-acid chain: UDP-N-acetylmuramoyl-L-alanyl-D-glutamate--L-lysine ligase (481 aa).

Residue S42 coordinates UDP-N-acetyl-alpha-D-muramoyl-L-alanyl-D-glutamate. 118–124 (GTKGKTT) provides a ligand contact to ATP. Residues Q158, 160–161 (TT), S187, and R195 each bind UDP-N-acetyl-alpha-D-muramoyl-L-alanyl-D-glutamate. An N6-carboxylysine modification is found at K229. Residues 404–407 (DDPN) carry the L-lysine recognition motif motif.

Belongs to the MurCDEF family. MurE subfamily. Carboxylation is probably crucial for Mg(2+) binding and, consequently, for the gamma-phosphate positioning of ATP.

The protein resides in the cytoplasm. The catalysed reaction is UDP-N-acetyl-alpha-D-muramoyl-L-alanyl-D-glutamate + L-lysine + ATP = UDP-N-acetyl-alpha-D-muramoyl-L-alanyl-gamma-D-glutamyl-L-lysine + ADP + phosphate + H(+). The protein operates within cell wall biogenesis; peptidoglycan biosynthesis. Catalyzes the addition of L-lysine to the nucleotide precursor UDP-N-acetylmuramoyl-L-alanyl-D-glutamate (UMAG) in the biosynthesis of bacterial cell-wall peptidoglycan. The polypeptide is UDP-N-acetylmuramoyl-L-alanyl-D-glutamate--L-lysine ligase (Streptococcus pyogenes serotype M28 (strain MGAS6180)).